The sequence spans 564 residues: Bicarbonate transporter BicA (564 aa).

Topologically, residues 1–11 (MQITNKIHFRN) are cytoplasmic. A helical membrane pass occupies residues 12-37 (LQGDLFGGVTAAVIALPMALAFGIAS). Residues 38-40 (GAG) are Periplasmic-facing. Residues 41-58 (ATAGLWGAVIVGFFAALF) form a helical membrane-spanning segment. Residues 59 to 70 (GGTPTLISEPTG) are Cytoplasmic-facing. Thr-69 is a hydrogencarbonate binding site. Residues 71 to 86 (PMTVVQTAVIASLVAA) form a helical membrane-spanning segment. Residues 87–90 (DPDN) lie on the Periplasmic side of the membrane. A helical membrane pass occupies residues 91–112 (GLAMAFTVVMMAGLFQIAFGLL). Residues 113–122 (KLGKYVTMMP) lie on the Cytoplasmic side of the membrane. The chain crosses the membrane as a helical span at residues 123-145 (YTVISGFMSGIGIILVILQLAPF). The Periplasmic segment spans residues 146-170 (LGQASPKGGVIGTLQALPNLVSNVR). Residues 171-185 (PVETLLALMTVGIIW) traverse the membrane as a helical segment. The Cytoplasmic portion of the chain corresponds to 186-196 (FMPSRWKKFAP). The chain crosses the membrane as a helical span at residues 197 to 211 (PQLVALVLGTIISIT). Residues 212-240 (LFGDLDIRRIGEIQAGLPALQLPVFQADQ) lie on the Periplasmic side of the membrane. Residues 241 to 269 (LQRMLIDAAVLGMLGCIDALLTSVVADSL) form a helical membrane-spanning segment. The Na(+) site is built by Asp-258 and Thr-262. The Cytoplasmic portion of the chain corresponds to 270 to 275 (TRTEHN). The chain crosses the membrane as a helical span at residues 276 to 292 (SNKELVGQGIGNVMSGL). The Periplasmic portion of the chain corresponds to 293–302 (FGGLGGAGAT). Gly-300 serves as a coordination point for Na(+). Ala-301 serves as a coordination point for hydrogencarbonate. Residue Thr-302 coordinates Na(+). The chain crosses the membrane as a helical span at residues 303–312 (MGTVVNIQSG). Over 313–315 (GRT) the chain is Cytoplasmic. The chain crosses the membrane as a helical span at residues 316–338 (ALSGLIRAMVLLVVILGAAKLAA). Residues 339–341 (TIP) are Periplasmic-facing. The chain crosses the membrane as a helical span at residues 342–357 (LAVLAGIAFKVGVDII). Residues 358–369 (DWGFLKRAHHVS) are Cytoplasmic-facing. The chain crosses the membrane as a helical span at residues 370 to 390 (IKGALIMYAVIVLTVLVDLIA). Residues 391 to 392 (AV) lie on the Periplasmic side of the membrane. Residues 393 to 405 (GIGVFIANILTID) form a helical membrane-spanning segment. Topologically, residues 406–564 (RMSALQSKAV…PSSSSVQTTY (159 aa)) are cytoplasmic. Positions 432–542 (KRWLDEGNGR…DDRSEALKDA (111 aa)) constitute an STAS domain.

It belongs to the SLC26A/SulP transporter (TC 2.A.53) family. In terms of assembly, forms homodimers through the STAS cytoplasmic domain.

Its subcellular location is the cell inner membrane. Low affinity, high-flux Na(+)-dependent bicarbonate transporter. Involved in carbone dioxide-concentrating mechanisms (CCMs) that accumulate CO(2) and improve photosynthetic carbon fixation. The chain is Bicarbonate transporter BicA from Synechocystis sp. (strain ATCC 27184 / PCC 6803 / Kazusa).